Reading from the N-terminus, the 247-residue chain is 3-oxoacyl-[acyl-carrier-protein] reductase FabG (247 aa).

Residues 12 to 15 (GASR), Thr37, 62 to 63 (DV), and Asn89 contribute to the NADP(+) site. Residue Ser141 participates in substrate binding. Residue Tyr154 is the Proton acceptor of the active site. Residues 154-158 (YAAAK) and Ile187 each bind NADP(+).

Belongs to the short-chain dehydrogenases/reductases (SDR) family. Homotetramer.

It catalyses the reaction a (3R)-hydroxyacyl-[ACP] + NADP(+) = a 3-oxoacyl-[ACP] + NADPH + H(+). Its pathway is lipid metabolism; fatty acid biosynthesis. Functionally, catalyzes the NADPH-dependent reduction of beta-ketoacyl-ACP substrates to beta-hydroxyacyl-ACP products, the first reductive step in the elongation cycle of fatty acid biosynthesis. The polypeptide is 3-oxoacyl-[acyl-carrier-protein] reductase FabG (fabG) (Pseudomonas aeruginosa (strain ATCC 15692 / DSM 22644 / CIP 104116 / JCM 14847 / LMG 12228 / 1C / PRS 101 / PAO1)).